A 522-amino-acid polypeptide reads, in one-letter code: Glucose-6-phosphate 1-dehydrogenase (522 aa).

Residues Gly40–Lys47, Arg74, and Lys177 contribute to the NADP(+) site. Residues Lys177, His207 to Lys211, Glu245, and Asp264 each bind D-glucose 6-phosphate. The Proton acceptor role is filled by His269. Position 364 (Arg364) interacts with NADP(+). D-glucose 6-phosphate is bound by residues Lys367 and Lys372. NADP(+)-binding residues include Lys373, Arg377, and Arg401. Residue Gln403 participates in D-glucose 6-phosphate binding. Residues Tyr409–Lys411, Asp429–Thr431, Arg495, and Trp517 each bind NADP(+).

Belongs to the glucose-6-phosphate dehydrogenase family.

Its subcellular location is the cytoplasm. The protein resides in the cytosol. It carries out the reaction D-glucose 6-phosphate + NADP(+) = 6-phospho-D-glucono-1,5-lactone + NADPH + H(+). The protein operates within carbohydrate degradation; pentose phosphate pathway; D-ribulose 5-phosphate from D-glucose 6-phosphate (oxidative stage): step 1/3. In terms of biological role, cytosolic glucose-6-phosphate dehydrogenase that catalyzes the first and rate-limiting step of the oxidative branch within the pentose phosphate pathway/shunt, an alternative route to glycolysis for the dissimilation of carbohydrates and a major source of reducing power and metabolic intermediates for fatty acid and nucleic acid biosynthetic processes. The protein is Glucose-6-phosphate 1-dehydrogenase (gspd-1) of Caenorhabditis elegans.